The following is a 484-amino-acid chain: Ribosomal RNA small subunit methyltransferase F (484 aa).

S-adenosyl-L-methionine is bound by residues 119-125 (ASAPGSK), glutamate 143, aspartate 170, and aspartate 188. Residue cysteine 241 is the Nucleophile of the active site.

It belongs to the class I-like SAM-binding methyltransferase superfamily. RsmB/NOP family.

The protein resides in the cytoplasm. The enzyme catalyses cytidine(1407) in 16S rRNA + S-adenosyl-L-methionine = 5-methylcytidine(1407) in 16S rRNA + S-adenosyl-L-homocysteine + H(+). Specifically methylates the cytosine at position 1407 (m5C1407) of 16S rRNA. The polypeptide is Ribosomal RNA small subunit methyltransferase F (Shewanella frigidimarina (strain NCIMB 400)).